The following is a 221-amino-acid chain: MMLVPLITVTVVAGTILVCYILYICRKKIRTVYNDNKIIMTKLKKIKSSNSSKSSKSTDSESDWEDHCSAMEQNNDVDNISRNEILDDDSFAGSLIWDNESNVMAPSTEHIYDSVAGSTLLINNDRNEQTIYQNTTVVINETETVEVLNEDTKQNPNYSSNPFVNYNKTSICSKSNPFITELNNKFSENNPFRRAHSDDYLNKQEQDHEHDDIESSVVSLV.

Position 1 (Met-1) is a topological domain, extracellular. Residues 2-22 (MLVPLITVTVVAGTILVCYIL) traverse the membrane as a helical segment. Residues 23 to 221 (YICRKKIRTV…DIESSVVSLV (199 aa)) are Cytoplasmic-facing. Phosphotyrosine; by host occurs at positions 112 and 132. 3 short sequence motifs (NPF-motif) span residues 161–163 (NPF), 176–178 (NPF), and 190–192 (NPF).

It belongs to the orthopoxvirus OPG164 protein family. As to quaternary structure, interacts with host NCK. Interacts with protein OPG161 (via C-terminus). Interacts with protein OPG056. Interacts (via C-terminus) with host kinesin light chain/KLC1. Interacts with host intersectin-1/ITSN1 and EPS15. Phosphorylated on Tyr-112 and Tyr-132. Phosphorylations activate the host ARP2-ARP3 complex and lead to actin nucleation.

Its subcellular location is the host cell membrane. Its function is as follows. Involved in the intracellular transport and egress of virions to the host cell surface with help of protein OPG056. Also participates in the formation of actin tails at the plasma membrane to allow efficient actin-based motility and thus cell to cell transmission of viral particles. Recruits host intersectin-1/ITSN1 and activates host CDC42 to drive ARP2/3-mediated actin polymerization. The polypeptide is Protein OPG164 (OPG164) (Homo sapiens (Human)).